Here is a 180-residue protein sequence, read N- to C-terminus: Cuticle protein 3 (180 aa).

Positions 1–16 (MMKLIVLAAFIGVCAG) are cleaved as a signal peptide. Residues 58 to 121 (EQGFRYAYET…PQGAHFPTPP (64 aa)) form the Chitin-binding type R&amp;R domain.

This Lonomia obliqua (Moth) protein is Cuticle protein 3.